Consider the following 260-residue polypeptide: Acetylglutamate kinase (260 aa).

Residues 46 to 47 (GG), R68, and N160 contribute to the substrate site.

Belongs to the acetylglutamate kinase family. ArgB subfamily.

It is found in the cytoplasm. The catalysed reaction is N-acetyl-L-glutamate + ATP = N-acetyl-L-glutamyl 5-phosphate + ADP. It participates in amino-acid biosynthesis; L-arginine biosynthesis; N(2)-acetyl-L-ornithine from L-glutamate: step 2/4. Its function is as follows. Catalyzes the ATP-dependent phosphorylation of N-acetyl-L-glutamate. The chain is Acetylglutamate kinase from Shewanella sp. (strain MR-7).